The primary structure comprises 161 residues: MORN repeat-containing protein 5 (161 aa).

MORN repeat units lie at residues Tyr8–Ile30, Tyr31–Gln53, and Tyr54–His75.

As to expression, expressed in sperm (at protein level).

The protein resides in the cell projection. It localises to the cilium. It is found in the flagellum. This chain is MORN repeat-containing protein 5 (MORN5), found in Homo sapiens (Human).